Consider the following 548-residue polypeptide: Probable malate:quinone oxidoreductase (548 aa).

Positions 521 to 548 (DKPQAADSTPKPQLKPKPVQKEVADIAL) are disordered. The span at 539-548 (VQKEVADIAL) shows a compositional bias: basic and acidic residues.

Belongs to the MQO family. FAD serves as cofactor.

It catalyses the reaction (S)-malate + a quinone = a quinol + oxaloacetate. It participates in carbohydrate metabolism; tricarboxylic acid cycle; oxaloacetate from (S)-malate (quinone route): step 1/1. The sequence is that of Probable malate:quinone oxidoreductase from Escherichia coli (strain ATCC 8739 / DSM 1576 / NBRC 3972 / NCIMB 8545 / WDCM 00012 / Crooks).